We begin with the raw amino-acid sequence, 392 residues long: 2,3-bisphosphoglycerate-independent phosphoglycerate mutase (392 aa).

The protein belongs to the BPG-independent phosphoglycerate mutase family. A-PGAM subfamily.

It catalyses the reaction (2R)-2-phosphoglycerate = (2R)-3-phosphoglycerate. It functions in the pathway carbohydrate degradation; glycolysis; pyruvate from D-glyceraldehyde 3-phosphate: step 3/5. Functionally, catalyzes the interconversion of 2-phosphoglycerate and 3-phosphoglycerate. The protein is 2,3-bisphosphoglycerate-independent phosphoglycerate mutase of Methanothrix thermoacetophila (strain DSM 6194 / JCM 14653 / NBRC 101360 / PT) (Methanosaeta thermophila).